Consider the following 103-residue polypeptide: Large ribosomal subunit protein eL42 (103 aa).

Cys18 and Cys21 together coordinate Zn(2+). A C4-type zinc finger spans residues Cys18–Cys81. The interval Leu40 to Gln62 is disordered. The segment covering Tyr47–Lys57 has biased composition (basic residues). Residues Cys78 and Cys81 each contribute to the Zn(2+) site.

The protein belongs to the eukaryotic ribosomal protein eL42 family. As to quaternary structure, part of the 50S ribosomal subunit. Zn(2+) is required as a cofactor.

Functionally, binds to the 23S rRNA. In Desulfurococcus amylolyticus (strain DSM 18924 / JCM 16383 / VKM B-2413 / 1221n) (Desulfurococcus kamchatkensis), this protein is Large ribosomal subunit protein eL42.